A 415-amino-acid chain; its full sequence is NAD-dependent protein deacetylase hst4 (415 aa).

The interval 1 to 26 is disordered; sequence MKVEEHVPLIQESRKRKCQSSENASK. Residues 40 to 337 form the Deacetylase sirtuin-type domain; the sequence is TGNENVDLSP…RRLKPLLDAP (298 aa). Residues 65 to 84 and 153 to 156 each bind NAD(+); these read GAGISCDAGIPDFRSSEGLF and QNID. His184 (proton acceptor) is an active-site residue. Cys192, Cys195, Cys214, and Cys217 together coordinate Zn(2+). NAD(+)-binding positions include 273–275, 303–305, and Leu323; these read GTS and NYD.

The protein belongs to the sirtuin family. Class I subfamily. The cofactor is Zn(2+).

The protein localises to the nucleus. It localises to the nucleolus. The enzyme catalyses N(6)-acetyl-L-lysyl-[protein] + NAD(+) + H2O = 2''-O-acetyl-ADP-D-ribose + nicotinamide + L-lysyl-[protein]. NAD-dependent histone deacetylase, which contributes to both telomeric and centromeric silencing, proper cell cycle progression, DNA damage control, recombination, and genomic maintenance. This Schizosaccharomyces pombe (strain 972 / ATCC 24843) (Fission yeast) protein is NAD-dependent protein deacetylase hst4 (hst4).